The sequence spans 65 residues: Large ribosomal subunit protein bL35 (65 aa).

Residues 1–21 (MPKMKTKSGAAKRFTVRAGGT) are disordered.

Belongs to the bacterial ribosomal protein bL35 family.

In Nitrosospira multiformis (strain ATCC 25196 / NCIMB 11849 / C 71), this protein is Large ribosomal subunit protein bL35.